The chain runs to 370 residues: DNA replication and repair protein RecF (370 aa).

An ATP-binding site is contributed by Gly-30 to Thr-37.

Belongs to the RecF family. Recruited to foci following DNA damage; probably interacts with RecO.

Its subcellular location is the cytoplasm. It localises to the nucleoid. Functionally, the RecF protein is involved in DNA metabolism; it is required for DNA replication and normal SOS inducibility. RecF binds preferentially to single-stranded, linear DNA. It also seems to bind ATP. Is recruited to repair centers, foci that are the site of double-strand DNA break(s) after RecN and RecO; recruitment may depend on RecO. A positive modulator of RecA. In Bacillus subtilis (strain 168), this protein is DNA replication and repair protein RecF.